A 55-amino-acid chain; its full sequence is ATP synthase small subunit 6, mitochondrial (55 aa).

The transit peptide at 1–15 (MRQFDPWPVFFRREW) directs the protein to the mitochondrion. A helical membrane pass occupies residues 20 to 39 (PFLVGFAVTGAIITKMSLGF).

Belongs to the ATPase 6 subunit family.

It is found in the mitochondrion inner membrane. Mitochondrial membrane ATP synthase (F(1)F(0) ATP synthase or Complex V) produces ATP from ADP in the presence of a proton gradient across the membrane which is generated by electron transport complexes of the respiratory chain. F-type ATPases consist of two structural domains, F(1) - containing the extramembraneous catalytic core and F(0) - containing the membrane proton channel, linked together by a central stalk and a peripheral stalk. During catalysis, ATP synthesis in the catalytic domain of F(1) is coupled via a rotary mechanism of the central stalk subunits to proton translocation. Part of the complex F(0) domain. Confers tolerance to several abiotic stresses (e.g. salt, mannitol, drought, oxidative and cold stresses), probably by providing additional energy needed for cell homeostasis. This chain is ATP synthase small subunit 6, mitochondrial, found in Solanum tuberosum (Potato).